We begin with the raw amino-acid sequence, 256 residues long: uncharacterized protein (256 aa).

Residues 1–22 form the signal peptide; sequence MGYLKRIGMCISLLIVIIFVTS. A lipid anchor (N-palmitoyl cysteine) is attached at C23. Residue C23 is the site of S-diacylglycerol cysteine attachment.

This sequence belongs to the staphylococcal tandem lipoprotein family.

It localises to the cell membrane. This is an uncharacterized protein from Staphylococcus aureus (strain MRSA252).